We begin with the raw amino-acid sequence, 305 residues long: DNA-directed RNA polymerase 35 kDa subunit (305 aa).

Belongs to the poxviridae DNA-directed RNA polymerase 35 kDa subunit family. As to quaternary structure, the DNA-dependent RNA polymerase used for intermediate and late genes expression consists of eight subunits 147 kDa, 133 kDa, 35 kDa, 30 kDa, 22 kDa, 19 kDa, 18 kDa and 7 kDa totalling more than 500 kDa in mass. The same holoenzyme, with the addition of the transcription-specificity factor RAP94, is used for early gene expression.

Its subcellular location is the virion. It carries out the reaction RNA(n) + a ribonucleoside 5'-triphosphate = RNA(n+1) + diphosphate. Its function is as follows. Part of the DNA-dependent RNA polymerase which catalyzes the transcription of viral DNA into RNA using the four ribonucleoside triphosphates as substrates. Responsible for the transcription of early, intermediate and late genes. DNA-dependent RNA polymerase associates with the early transcription factor (ETF), itself composed of D6 and A7, thereby allowing the early genes transcription. Late transcription, and probably also intermediate transcription, require newly synthesized RNA polymerase. In Bos taurus (Bovine), this protein is DNA-directed RNA polymerase 35 kDa subunit (OPG156).